A 256-amino-acid chain; its full sequence is Follistatin-related protein 3 (256 aa).

The first 23 residues, Met1–Ala23, serve as a signal peptide directing secretion. One can recognise a TB domain in the interval Gly34 to Gly105. 8 disulfides stabilise this stretch: Cys36/Cys59, Cys46/Cys90, Cys60/Cys93, Cys97/Cys108, Cys102/Cys117, Cys119/Cys151, Cys123/Cys144, and Cys133/Cys165. The N-linked (GlcNAc...) asparagine glycan is linked to Asn71. The Follistatin-like 1 domain occupies Cys97 to Cys117. Kazal-like domains are found at residues Leu111–Lys167 and Ser187–Gly243. The 24-residue stretch at Ser168–Val191 folds into the Follistatin-like 2 domain. Intrachain disulfides connect Cys193/Cys227, Cys198/Cys220, and Cys209/Cys241. The N-linked (GlcNAc...) asparagine glycan is linked to Asn213.

As to quaternary structure, interacts with INHBA and INHBB. Interacts with FN1. Interacts with ADAM12. Interacts with MLLT10; the interaction enhances MLLT10 in vitro transcriptional activity and self-association. Interacts with MSTN. Abundantly expressed in heart, lung, kidney and testis. Continuously expressed in embryonic heart.

It localises to the secreted. Its subcellular location is the nucleus. In terms of biological role, the secreted form is a binding and antagonizing protein for members of the TGF-beta family, such as activin, BMP2 and MSTN. Inhibits activin A-, activin B-, BMP2- and MSDT-induced cellular signaling; more effective on activin A than on activin B. Involved in bone formation; inhibits osteoclast differentiation. Involved in hematopoiesis; involved in differentiation of hemopoietic progenitor cells, increases hematopoietic cell adhesion to fibronectin and seems to contribute to the adhesion of hematopoietic precursor cells to the bone marrow stroma. The nuclear form is probably involved in transcriptional regulation via interaction with MLLT10. This Mus musculus (Mouse) protein is Follistatin-related protein 3 (Fstl3).